The following is a 455-amino-acid chain: Ribosomal protein uS12 methylthiotransferase RimO (455 aa).

The 117-residue stretch at 10–126 (RKVSMISLGC…ILELIEAHDR (117 aa)) folds into the MTTase N-terminal domain. Residues C19, C55, C89, C164, C168, and C171 each coordinate [4Fe-4S] cluster. The Radical SAM core domain occupies 150–380 (SSPFYSTYVK…MKAQQRVSFR (231 aa)). Residues 383–451 (RALIGRVEPV…EYDLIGEIVD (69 aa)) enclose the TRAM domain.

Belongs to the methylthiotransferase family. RimO subfamily. Requires [4Fe-4S] cluster as cofactor.

The protein resides in the cytoplasm. The catalysed reaction is L-aspartate(89)-[ribosomal protein uS12]-hydrogen + (sulfur carrier)-SH + AH2 + 2 S-adenosyl-L-methionine = 3-methylsulfanyl-L-aspartate(89)-[ribosomal protein uS12]-hydrogen + (sulfur carrier)-H + 5'-deoxyadenosine + L-methionine + A + S-adenosyl-L-homocysteine + 2 H(+). Catalyzes the methylthiolation of an aspartic acid residue of ribosomal protein uS12. This Syntrophotalea carbinolica (strain DSM 2380 / NBRC 103641 / GraBd1) (Pelobacter carbinolicus) protein is Ribosomal protein uS12 methylthiotransferase RimO.